Reading from the N-terminus, the 205-residue chain is MAARDATSGSLSEESSALDLPSACDIRDYVLQGPSQEANSEAFSSLEFHSFPYSSDVDPDTSNLNIEQNNSWTAENFWLDPAVKGQSEKEEDDGLRKSLDRFYEMFGHPQPGSANSLSASVCKCLSQKITQLRGQESQKYALRSFQMARVIFNRDGCSVLQRHSRDTHFYPLEEGSTSLDDEKPNPGLSKDITHFLLQQNVMKDL.

As to quaternary structure, component of the shieldin complex, consisting of SHLD1, SHLD2, SHLD3 and MAD2L2/REV7. Within the complex, SHLD2 forms a scaffold which interacts with a SHLD3-MAD2L2 subcomplex via its N-terminus, and with SHLD1 via its C-terminus. Interacts with ASTE1.

The protein resides in the chromosome. Its function is as follows. Component of the shieldin complex, which plays an important role in repair of DNA double-stranded breaks (DSBs). During G1 and S phase of the cell cycle, the complex functions downstream of TP53BP1 to promote non-homologous end joining (NHEJ) and suppress DNA end resection. Mediates various NHEJ-dependent processes including immunoglobulin class-switch recombination, and fusion of unprotected telomeres. This chain is Shieldin complex subunit 1, found in Homo sapiens (Human).